The chain runs to 525 residues: Coronin-2A (525 aa).

WD repeat units follow at residues N24–L71, D72–T122, A123–T170, S171–V214, L215–S259, V260–P305, and H306–K342. Positions Q485–Q524 form a coiled coil.

It belongs to the WD repeat coronin family. As to quaternary structure, binds actin. Component of the N-Cor repressor complex, at least composed of NCOR1, NCOR2, HDAC3, TBL1X, TBL1R, CORO2A and GPS2.

The polypeptide is Coronin-2A (CORO2A) (Homo sapiens (Human)).